The following is a 223-amino-acid chain: Putative archaetidylserine decarboxylase proenzyme (223 aa).

Ser-183 functions as the Schiff-base intermediate with substrate; via pyruvic acid in the catalytic mechanism. At Ser-183 the chain carries Pyruvic acid (Ser); by autocatalysis.

The protein belongs to the phosphatidylserine decarboxylase family. PSD-A subfamily. In terms of assembly, heterodimer of a large membrane-associated beta subunit and a small pyruvoyl-containing alpha subunit. The cofactor is pyruvate. Is synthesized initially as an inactive proenzyme. Formation of the active enzyme involves a self-maturation process in which the active site pyruvoyl group is generated from an internal serine residue via an autocatalytic post-translational modification. Two non-identical subunits are generated from the proenzyme in this reaction, and the pyruvate is formed at the N-terminus of the alpha chain, which is derived from the carboxyl end of the proenzyme. The post-translation cleavage follows an unusual pathway, termed non-hydrolytic serinolysis, in which the side chain hydroxyl group of the serine supplies its oxygen atom to form the C-terminus of the beta chain, while the remainder of the serine residue undergoes an oxidative deamination to produce ammonia and the pyruvoyl prosthetic group on the alpha chain.

It localises to the cell membrane. It carries out the reaction archaetidylserine + H(+) = archaetidylethanolamine + CO2. Its function is as follows. Catalyzes the formation of archaetidylethanolamine (PtdEtn) from archaetidylserine (PtdSer). The chain is Putative archaetidylserine decarboxylase proenzyme from Methanothermobacter thermautotrophicus (strain ATCC 29096 / DSM 1053 / JCM 10044 / NBRC 100330 / Delta H) (Methanobacterium thermoautotrophicum).